The chain runs to 131 residues: Small ribosomal subunit protein uS8 (131 aa).

The protein belongs to the universal ribosomal protein uS8 family. As to quaternary structure, part of the 30S ribosomal subunit. Contacts proteins S5 and S12.

In terms of biological role, one of the primary rRNA binding proteins, it binds directly to 16S rRNA central domain where it helps coordinate assembly of the platform of the 30S subunit. In Verminephrobacter eiseniae (strain EF01-2), this protein is Small ribosomal subunit protein uS8.